The following is a 175-amino-acid chain: Auxin-responsive protein IAA28 (175 aa).

The interval 1–39 (MEEEKRLELRLAPPCHQFTSNNNINGSKQKSSTKETSFL) is disordered. Positions 7–11 (LELRL) match the EAR-like (transcriptional repression) motif. Over residues 17 to 39 (QFTSNNNINGSKQKSSTKETSFL) the composition is skewed to polar residues. One can recognise a PB1 domain in the interval 80–161 (ELYVKINMEG…TVKRLHVLKT (82 aa)).

Belongs to the Aux/IAA family. Homodimers and heterodimers. Interacts with TPL. As to expression, in roots and inflorescence stems.

It is found in the nucleus. Aux/IAA proteins are short-lived transcriptional factors that function as repressors of early auxin response genes at low auxin concentrations. Repression is thought to result from the interaction with auxin response factors (ARFs), proteins that bind to the auxin-responsive promoter element (AuxRE). Formation of heterodimers with ARF proteins may alter their ability to modulate early auxin response genes expression. The chain is Auxin-responsive protein IAA28 (IAA28) from Arabidopsis thaliana (Mouse-ear cress).